The primary structure comprises 287 residues: Prepilin leader peptidase/N-methyltransferase (287 aa).

6 helical membrane-spanning segments follow: residues 10–30 (LGFP…NVVI), 101–121 (ISIQ…ASVW), 125–145 (FGWQ…MSGI), 177–197 (KPAL…WWLF), 226–246 (ILPI…IWLF), and 253–273 (ATPI…FFWG).

This sequence belongs to the peptidase A24 family.

It is found in the cell inner membrane. It carries out the reaction Typically cleaves a -Gly-|-Phe- bond to release an N-terminal, basic peptide of 5-8 residues from type IV prepilin, and then N-methylates the new N-terminal amino group, the methyl donor being S-adenosyl-L-methionine.. In terms of biological role, plays an essential role in type IV pili and type II pseudopili formation by proteolytically removing the leader sequence from substrate proteins and subsequently monomethylating the alpha-amino group of the newly exposed N-terminal phenylalanine. The protein is Prepilin leader peptidase/N-methyltransferase (xpsO) of Xanthomonas campestris pv. campestris (strain ATCC 33913 / DSM 3586 / NCPPB 528 / LMG 568 / P 25).